Consider the following 361-residue polypeptide: MHNLLENLRRRLLAQRTPEPLPPTSQGLARPSHDVVRGPCDADIPPDARNTMPEGITVEEALAVAELPQKHALDILATAQAIRSVHKGGPAALCGIVNAKSGRCPEDCAFCAQSSHHATGSPVHALLDAETLLRRAEELRQSGAERYGIVTSGTRLTVRELDTLCEAAVRIRRETGIALCGSLGQLTPDAAACLKEAGFSSYHHNLETSRSFFPAICSTHAYDDDIATVRAARAAGLRTCSGGIFGMGETDAQRIELSATLRELDVDSIPVNLLSPIPGTPLQHRPTMPPMRALVSIAIYRLMHPARDILVCGGREATLGPWQSWIFLAGANGMMVGNYLTTTGRDMADDLAMLATLGVRA.

The interval 14-38 is disordered; the sequence is AQRTPEPLPPTSQGLARPSHDVVRG. One can recognise a Radical SAM core domain in the interval 86–315; the sequence is HKGGPAALCG…ARDILVCGGR (230 aa). The [4Fe-4S] cluster site is built by C104, C108, and C111. Positions 180 and 240 each coordinate [2Fe-2S] cluster.

This sequence belongs to the radical SAM superfamily. Biotin synthase family. In terms of assembly, homodimer. [4Fe-4S] cluster serves as cofactor. Requires [2Fe-2S] cluster as cofactor.

It catalyses the reaction (4R,5S)-dethiobiotin + (sulfur carrier)-SH + 2 reduced [2Fe-2S]-[ferredoxin] + 2 S-adenosyl-L-methionine = (sulfur carrier)-H + biotin + 2 5'-deoxyadenosine + 2 L-methionine + 2 oxidized [2Fe-2S]-[ferredoxin]. The protein operates within cofactor biosynthesis; biotin biosynthesis; biotin from 7,8-diaminononanoate: step 2/2. In terms of biological role, catalyzes the conversion of dethiobiotin (DTB) to biotin by the insertion of a sulfur atom into dethiobiotin via a radical-based mechanism. This chain is Biotin synthase, found in Nitratidesulfovibrio vulgaris (strain DP4) (Desulfovibrio vulgaris).